We begin with the raw amino-acid sequence, 174 residues long: Small ribosomal subunit protein uS5 (174 aa).

The region spanning 19–82 (LREKMVAINR…DEARRKMVKV (64 aa)) is the S5 DRBM domain.

This sequence belongs to the universal ribosomal protein uS5 family. Part of the 30S ribosomal subunit. Contacts proteins S4 and S8.

Its function is as follows. With S4 and S12 plays an important role in translational accuracy. Functionally, located at the back of the 30S subunit body where it stabilizes the conformation of the head with respect to the body. The protein is Small ribosomal subunit protein uS5 of Azoarcus sp. (strain BH72).